A 100-amino-acid chain; its full sequence is Urease subunit gamma (100 aa).

The protein belongs to the urease gamma subunit family. As to quaternary structure, heterotrimer of UreA (gamma), UreB (beta) and UreC (alpha) subunits. Three heterotrimers associate to form the active enzyme.

It is found in the cytoplasm. It carries out the reaction urea + 2 H2O + H(+) = hydrogencarbonate + 2 NH4(+). It functions in the pathway nitrogen metabolism; urea degradation; CO(2) and NH(3) from urea (urease route): step 1/1. The polypeptide is Urease subunit gamma (Rhodopseudomonas palustris (strain BisB18)).